A 350-amino-acid chain; its full sequence is Protein pelota homolog (350 aa).

It belongs to the eukaryotic release factor 1 family. Pelota subfamily. As to quaternary structure, monomer. Requires a divalent metal cation as cofactor.

The protein localises to the cytoplasm. May function in recognizing stalled ribosomes, interact with stem-loop structures in stalled mRNA molecules, and effect endonucleolytic cleavage of the mRNA. May play a role in the release non-functional ribosomes and degradation of damaged mRNAs. Has endoribonuclease activity. This Methanosarcina barkeri (strain Fusaro / DSM 804) protein is Protein pelota homolog.